A 127-amino-acid polypeptide reads, in one-letter code: Gamma-synuclein (127 aa).

A run of 2 repeats spans residues 20-30 (EKTKQGVTEAA) and 31-41 (EKTKEGVMYVG). Positions 20-67 (EKTKQGVTEAAEKTKEGVMYVGAKTKEGVVQSVTSVAEKTKEQANAVS) are 4 X 11 AA tandem repeats of [EGSA]-K-T-K-[EQ]-[GQ]-V-X(4). Residues 42 to 56 (AKTKEGVVQSVTSVA) form a 3; approximate repeat. Repeat unit 4 spans residues 57 to 67 (EKTKEQANAVS). Phosphoserine occurs at positions 67, 72, and 124. A disordered region spans residues 99–127 (ALKQPVPSQEDEAAKAEEQVAEETKSGGD). Residues 110 to 127 (EAAKAEEQVAEETKSGGD) are compositionally biased toward basic and acidic residues.

This sequence belongs to the synuclein family. In terms of assembly, may be a centrosome-associated protein. Interacts with MYOC; affects its secretion and its aggregation. In terms of processing, phosphorylated by BARK1 and GRK5. In terms of tissue distribution, predominantly expressed in retina (predominantly in outer nuclear layer, also in inner segment of photoreceptor cells, some individual cells located in the inner nuclear layer, inner plexiform layer and in nerve fiber layer). Also found in brain and heart.

It is found in the cytoplasm. Its subcellular location is the perinuclear region. The protein localises to the cytoskeleton. The protein resides in the microtubule organizing center. It localises to the centrosome. It is found in the spindle. Plays a role in neurofilament network integrity. May be involved in modulating axonal architecture during development and in the adult. In vitro, increases the susceptibility of neurofilament-H to calcium-dependent proteases. May also function in modulating the keratin network in skin. Activates the MAPK and Elk-1 signal transduction pathway. The polypeptide is Gamma-synuclein (SNCG) (Bos taurus (Bovine)).